The sequence spans 215 residues: Probable phosphoglycerate mutase GpmB (215 aa).

Substrate contacts are provided by residues 8-15 (RHGETQWN), 21-22 (QG), arginine 58, lysine 60, 82-85 (ELDM), 104-105 (RR), and 151-152 (GI). Residue histidine 9 is the Tele-phosphohistidine intermediate of the active site. The active-site Proton donor/acceptor is the glutamate 82.

Belongs to the phosphoglycerate mutase family. GpmB subfamily.

It catalyses the reaction (2R)-2-phosphoglycerate = (2R)-3-phosphoglycerate. It functions in the pathway carbohydrate degradation; glycolysis; pyruvate from D-glyceraldehyde 3-phosphate: step 3/5. This Salmonella agona (strain SL483) protein is Probable phosphoglycerate mutase GpmB.